Here is a 435-residue protein sequence, read N- to C-terminus: F-box/FBD/LRR-repeat protein At5g44980 (435 aa).

Positions 3 to 49 constitute an F-box domain; the sequence is RDYISELPDSLLTQILLELRTKDSVKTSVLSKRWRNLWLNVPGLELF. LRR repeat units lie at residues 88-114, 138-162, 165-190, 191-217, 250-275, and 324-349; these read CKGY…YVFM, LHNV…KLEN, HGED…ELIR, PFDI…TLHF, VKNL…DLRM, and MWSS…ILEY. The FBD domain maps to 355–405; sequence REQVDFTNVPQCLISTLEYVEIKEPNEKSTIKLVNYFLENSAVLKKLTLRF.

In Arabidopsis thaliana (Mouse-ear cress), this protein is F-box/FBD/LRR-repeat protein At5g44980.